The following is a 194-amino-acid chain: 4'-phosphooxetanocin A phosphatase (194 aa).

Residues Arg16 and Trp17 each contribute to the 4'-phosphooxetanocin A site. Trp17 contacts oxetanocin A. Positions 31, 66, and 67 each coordinate Mg(2+). 3 residues coordinate 4'-phosphooxetanocin A: His75, Ser78, and Lys81. Positions 75 and 78 each coordinate oxetanocin A. Asp132 contacts Mg(2+).

The protein belongs to the 5DNU family. Homodimer. Mg(2+) serves as cofactor. It depends on Co(2+) as a cofactor. Mn(2+) is required as a cofactor.

The catalysed reaction is 4'-phosphooxetanocin A + H2O = oxetanocin A + phosphate. Its function is as follows. Phosphohydrolase involved in the biosynthesis of oxetanocin A (OXT-A), a nucleoside analog with antitumor, antiviral and antibacterial properties. Catalyzes the hydrolysis of phosphooxetanocin A (OXT-A-P) to generate oxetanocin A (OXT-A) and a molecule of inorganic phosphate. Can also bind and hydrolyze OXT triphosphate (OXT-A-PPP) and OXT diphosphate (OXT-A-PP), and thus catalyze the sequential hydrolysis of tri-, di- and mono-phosphorylated oxetanocin A compounds, releasing one molecule of inorganic phosphate at a time. In vitro can also use dATP, dAMP and dADP. In Priestia megaterium (Bacillus megaterium), this protein is 4'-phosphooxetanocin A phosphatase.